The following is a 37-amino-acid chain: Large ribosomal subunit protein bL36 (37 aa).

The protein belongs to the bacterial ribosomal protein bL36 family.

The protein is Large ribosomal subunit protein bL36 of Desulforapulum autotrophicum (strain ATCC 43914 / DSM 3382 / VKM B-1955 / HRM2) (Desulfobacterium autotrophicum).